Reading from the N-terminus, the 1091-residue chain is Error-prone DNA polymerase (1091 aa).

The interval 1-51 (MGWSNGPPSWAEMERVLNGKPRHAGVPAFDADGDVPRSRKRGAYQPPGRER) is disordered.

It belongs to the DNA polymerase type-C family. DnaE2 subfamily.

The protein localises to the cytoplasm. It carries out the reaction DNA(n) + a 2'-deoxyribonucleoside 5'-triphosphate = DNA(n+1) + diphosphate. DNA polymerase involved in damage-induced mutagenesis and translesion synthesis (TLS). It is not the major replicative DNA polymerase. This chain is Error-prone DNA polymerase, found in Mycobacterium bovis (strain ATCC BAA-935 / AF2122/97).